The sequence spans 131 residues: Large ribosomal subunit protein eL32 (131 aa).

The protein belongs to the eukaryotic ribosomal protein eL32 family.

The sequence is that of Large ribosomal subunit protein eL32 (rpl32e) from Sulfurisphaera tokodaii (strain DSM 16993 / JCM 10545 / NBRC 100140 / 7) (Sulfolobus tokodaii).